The sequence spans 639 residues: Chaperone protein DnaK 1 (639 aa).

Threonine 199 is subject to Phosphothreonine; by autocatalysis. A compositionally biased stretch (low complexity) spans 603-612 (QQQAQAQQAP). Positions 603-639 (QQQAQAQQAPGGEGEQEAKQDDNVVDAEFEEVKDEKK) are disordered. Positions 625–639 (NVVDAEFEEVKDEKK) are enriched in acidic residues.

It belongs to the heat shock protein 70 family.

In terms of biological role, acts as a chaperone. The chain is Chaperone protein DnaK 1 from Photobacterium profundum (strain SS9).